A 231-amino-acid chain; its full sequence is Superoxide dismutase [Mn], mitochondrial (231 aa).

The N-terminal 27 residues, 1–27, are a transit peptide targeting the mitochondrion; sequence MALRTLASRKTLAAAALPLAAAAAARG. Mn(2+)-binding residues include histidine 55, histidine 103, aspartate 192, and histidine 196.

It belongs to the iron/manganese superoxide dismutase family. As to quaternary structure, homotetramer. The cofactor is Mn(2+).

Its subcellular location is the mitochondrion matrix. It catalyses the reaction 2 superoxide + 2 H(+) = H2O2 + O2. Functionally, destroys superoxide anion radicals which are normally produced within the cells and which are toxic to biological systems. This Oryza sativa subsp. japonica (Rice) protein is Superoxide dismutase [Mn], mitochondrial (SODA).